A 537-amino-acid polypeptide reads, in one-letter code: ESX-2 secretion system protein EccE2 (537 aa).

A helical transmembrane segment spans residues 31–51 (ALGGQLGAVMAVVVGVALVFV).

Belongs to the EccE family. Could be part of the ESX-2 / type VII secretion system (T7SS), which is composed of cytosolic and membrane components.

Its subcellular location is the cell membrane. The chain is ESX-2 secretion system protein EccE2 (eccE2) from Mycobacterium tuberculosis (strain CDC 1551 / Oshkosh).